The chain runs to 450 residues: Plasminogen-binding protein PgbA (450 aa).

3 stretches are compositionally biased toward basic and acidic residues: residues 262 to 273, 284 to 310, and 317 to 362; these read EIKQEAIKEPKK, LEEK…DERK, and KAME…REIN. Positions 262–450 are disordered; the sequence is EIKQEAIKEP…RRKALEMNKK (189 aa). Residues 363-386 show a composition bias toward polar residues; sequence QESANEPSSENNATLKDTENTSVL. A compositionally biased stretch (basic and acidic residues) spans 389–450; that stretch reads SAAKKEAPKP…RRKALEMNKK (62 aa).

It localises to the cell surface. Functionally, binds plasminogen, specifically, and in a concentration and lysine-dependent manner. Plasminogen is the precursor of plasmin, a serine protease that cleaves fibrin, fibronectin, laminin and vitronectin. Acquisition of plasminogen/plasmin could enable H.pylori to degrade host components. This chain is Plasminogen-binding protein PgbA (pgbA), found in Helicobacter pylori (strain J99 / ATCC 700824) (Campylobacter pylori J99).